A 748-amino-acid polypeptide reads, in one-letter code: Peptidyl serine alpha-galactosyltransferase (748 aa).

The first 26 residues, 1-26, serve as a signal peptide directing secretion; sequence MVAVFHGPLVLGALLLLLALQHGASA. Over 27 to 710 the chain is Extracellular; it reads EEPGFANRTG…GPSLHSLLGR (684 aa). N-linked (GlcNAc...) asparagine glycans are attached at residues Asn33, Asn184, and Asn297. A ShKT domain is found at 415–449; that stretch reads CQDFHPKCEEWKESGECTKNENYMTENCRKTCDKC. 3 disulfide bridges follow: Cys415/Cys449, Cys422/Cys442, and Cys431/Cys446. 2 disordered regions span residues 474–576 and 611–670; these read ELQP…ADPK and EVPK…KKNI. The segment covering 531 to 565 has biased composition (pro residues); that stretch reads SPPPSPPPASPPPVDSPPPMSPPPESPSPDKPPPK. A compositionally biased stretch (basic and acidic residues) spans 611-637; it reads EVPKRTKATDEEEEAPKAKHAESHLTL. The helical transmembrane segment at 711 to 731 threads the bilayer; that stretch reads LNTWQALVLWLVVVVAFLALV. At 732–748 the chain is on the cytoplasmic side; the sequence is PRIAKLRRRQRSGMRTE.

Mn(2+) serves as cofactor.

The protein localises to the membrane. Glycosyltransferase involved in the O-galactosylation of several proteins including extensins. Catalyzes the transfer of alpha-galactosyl to Ser residues. Hydroxylation of proline residues adjacent to the serine acceptor is required for activity. Utilizes selectively UDP-galactose as a donor nucleotide sugar. This chain is Peptidyl serine alpha-galactosyltransferase, found in Chlamydomonas reinhardtii (Chlamydomonas smithii).